A 148-amino-acid polypeptide reads, in one-letter code: Deoxyuridine 5'-triphosphate nucleotidohydrolase (148 aa).

Residues 67–69 (RSG), Asn-80, 84–86 (LID), and Met-94 contribute to the substrate site.

Belongs to the dUTPase family. Requires Mg(2+) as cofactor.

The catalysed reaction is dUTP + H2O = dUMP + diphosphate + H(+). It functions in the pathway pyrimidine metabolism; dUMP biosynthesis; dUMP from dCTP (dUTP route): step 2/2. This enzyme is involved in nucleotide metabolism: it produces dUMP, the immediate precursor of thymidine nucleotides and it decreases the intracellular concentration of dUTP so that uracil cannot be incorporated into DNA. This chain is Deoxyuridine 5'-triphosphate nucleotidohydrolase, found in Burkholderia thailandensis (strain ATCC 700388 / DSM 13276 / CCUG 48851 / CIP 106301 / E264).